The primary structure comprises 1084 residues: Transcription elongation factor SPT5 (1084 aa).

The segment at 1–91 is disordered; sequence MSDSEDSDFS…DDEYEDEDPW (91 aa). 3 stretches are compositionally biased toward acidic residues: residues 20-32, 41-62, and 77-91; these read AEEV…EEEQ, AEEE…EEDD, and DEAD…EDPW. The segment at 175–269 is interaction with SUPT4H1; it reads DPNLWTVKCK…TDVLKVVKEV (95 aa). 4 consecutive KOW domains span residues 272–305, 419–450, 471–502, and 593–626; these read LKPK…ISLK, LQAG…ITIM, FRMG…VILF, and IHVK…LHCK. Residues 312-419 form an interaction with RNA polymerase II region; that stretch reads LDRIKARMSM…TTGKEREHNL (108 aa). Position 665 is a phosphoserine (S665). The interval 667–700 is disordered; that stretch reads RISSPMHPGGGGQPQRGGGGGGGGGMGRGRGRRD. Over residues 674-694 the composition is skewed to gly residues; it reads PGGGGQPQRGGGGGGGGGMGR. A KOW 5 domain is found at 702 to 735; sequence DLIGQTVRISQGPYKGYIGVVKDATESTARVELH. Residues 748-973 form a disordered region; sequence LTTVGGKERQ…HTPGSNIDQA (226 aa). One copy of the CTR1-1; approximate repeat lies at 758–763; that stretch reads GRSSTH. An 8 X 7 AA approximate tandem repeats of G-S-[QR]-T-P-X-[YQ], motif CTR1 region spans residues 758 to 815; it reads GRSSTHLRTPMYGSQTPIYGTGSRTPMYGSQTPLHDGSRTPHYGSQTPLHDGSRTPGQ. Polar residues predominate over residues 759 to 790; sequence RSSTHLRTPMYGSQTPIYGTGSRTPMYGSQTP. Residues 764-769 form a CTR1-2; approximate repeat; it reads LRTPMY. The CTR1-3 repeat unit spans residues 770-776; it reads GSQTPIY. T773 and T782 each carry phosphothreonine; by CDK9. A CTR1-4 repeat occupies 779–785; the sequence is GSRTPMY. A CTR1-5 repeat occupies 786–792; it reads GSQTPLH. The stretch at 794-800 is one CTR1-6 repeat; the sequence is GSRTPHY. A CTR1-7 repeat occupies 801-807; it reads GSQTPLH. A CTR1-8 repeat occupies 809–815; it reads GSRTPGQ. Positions 832 to 842 are enriched in acidic residues; sequence DEYEFAYDDEP. A CTR2-1 repeat occupies 842–849; it reads PSPSPQGY. The segment at 842-948 is 10 X 8 AA approximate tandem repeats of P-[TS]-P-S-P-[QA]-[SG]-Y, motif CTR2; the sequence is PSPSPQGYGG…ASPSPSPVGY (107 aa). The stretch at 852-860 is one CTR2-2; approximate repeat; that stretch reads TPNPQTPGY. Over residues 855–864 the composition is skewed to pro residues; the sequence is PQTPGYPEVP. One copy of the CTR2-3; approximate repeat lies at 861–867; that stretch reads PEVPSPQ. Over residues 866-888 the composition is skewed to polar residues; the sequence is PQVNPQYNPQTPGTPAMYNTDQY. One copy of the CTR2-4; half-length repeat lies at 879 to 883; sequence TPAMY. One copy of the CTR2-5; approximate repeat lies at 894–900; the sequence is PSPQGSY. The span at 894-909 shows a compositional bias: low complexity; sequence PSPQGSYQPSPSPQSY. One copy of the CTR2-6 repeat lies at 902–909; sequence PSPSPQSY. One copy of the CTR2-7; approximate repeat lies at 914–919; the sequence is PSPVGY. The stretch at 922 to 928 is one CTR2-8 repeat; it reads THSPASY. The stretch at 930 to 937 is one CTR2-9 repeat; the sequence is PTPSPMAY. Residues 941-948 form a CTR2-10 repeat; it reads PSPSPVGY.

It belongs to the SPT5 family. As to quaternary structure, interacts with SUPT4H1 to form the DSIF complex. DSIF interacts with RNA polymerase II and with the positive transcription elongation factor b complex (P-TEFb complex), which is composed of CDK9 and cyclin-T. Post-translationally, phosphorylated. Phosphorylation by P-TEFb (CDK9) at Thr residues of the C-terminal repeats alleviates transcriptional pausing and promotes transcription elongation.

Its subcellular location is the nucleus. In terms of biological role, component of the DRB sensitivity-inducing factor complex (DSIF complex), which regulates mRNA processing and transcription elongation by RNA polymerase II. DSIF positively regulates mRNA capping by stimulating the mRNA guanylyltransferase activity of RNGTT/CAP1A. DSIF also acts cooperatively with the negative elongation factor complex (NELF complex) to enhance transcriptional pausing at sites proximal to the promoter. Transcriptional pausing may facilitate the assembly of an elongation competent RNA polymerase II complex. DSIF and NELF promote pausing by inhibition of the transcription elongation factor TFIIS/S-II. TFIIS/S-II binds to RNA polymerase II at transcription pause sites and stimulates the weak intrinsic nuclease activity of the enzyme. Cleavage of blocked transcripts by RNA polymerase II promotes the resumption of transcription from the new 3' terminus and may allow repeated attempts at transcription through natural pause sites. Following phosphorylation by CDK9, DSIF can also positively regulate transcriptional elongation. Regulation of transcriptional elongation by this protein is required for the expression of genes which control neuronal development. This chain is Transcription elongation factor SPT5 (supt5h), found in Danio rerio (Zebrafish).